Here is a 713-residue protein sequence, read N- to C-terminus: Probable glutamate carboxypeptidase VP8 (713 aa).

Residues 1–10 (MPHSVLARLP) lie on the Cytoplasmic side of the membrane. Residues 11–31 (PGSVRLVAAFGLLLLVSLLVL) form a helical; Signal-anchor for type II membrane protein membrane-spanning segment. Over 32–713 (HRRPGRPHVA…PTNFSSLVTP (682 aa)) the chain is Extracellular. N-linked (GlcNAc...) asparagine glycans are attached at residues N66 and N311. Residues 245 to 539 (ATSGAERLKF…EIWGLLALRL (295 aa)) are catalytic. Zn(2+) contacts are provided by H345 and D355. Catalysis depends on E392, which acts as the Nucleophile. 3 residues coordinate Zn(2+): E393, D421, and H505. N-linked (GlcNAc...) asparagine glycans are attached at residues N667 and N706.

Belongs to the peptidase M28 family. M28B subfamily. Zn(2+) serves as cofactor.

Its subcellular location is the cell membrane. It catalyses the reaction Release of an unsubstituted, C-terminal glutamyl residue, typically from Ac-Asp-Glu or folylpoly-gamma-glutamates.. Involved in the regulation of meristem development and seed maturation processes. Mediates regulation of embryonic regulatory genes and genes controlling abscisic acid (ABA) biosynthesis and turnover in developing seeds. May be required for the synthesis of small signaling molecules that integrates meristem and embryo formation in seeds. The chain is Probable glutamate carboxypeptidase VP8 from Zea mays (Maize).